Reading from the N-terminus, the 126-residue chain is Large ribosomal subunit protein bL12 (126 aa).

Belongs to the bacterial ribosomal protein bL12 family. Homodimer. Part of the ribosomal stalk of the 50S ribosomal subunit. Forms a multimeric L10(L12)X complex, where L10 forms an elongated spine to which 2 to 4 L12 dimers bind in a sequential fashion. Binds GTP-bound translation factors.

Forms part of the ribosomal stalk which helps the ribosome interact with GTP-bound translation factors. Is thus essential for accurate translation. The chain is Large ribosomal subunit protein bL12 from Caulobacter sp. (strain K31).